The primary structure comprises 26 residues: Thioredoxin H-type (26 aa).

Belongs to the thioredoxin family. Plant H-type subfamily.

It is found in the cytoplasm. Participates in various redox reactions through the reversible oxidation of the active center dithiol to a disulfide. The H form is known to activate a number of cytosolic enzymes. The polypeptide is Thioredoxin H-type (Populus euphratica (Euphrates poplar)).